The sequence spans 436 residues: CaM kinase-like vesicle-associated protein (436 aa).

The region spanning 24 to 286 (YDLGQIVKSE…AQEAINHEWI (263 aa)) is the Protein kinase domain. Residues 328–436 (APENQTAAAT…ALDTVEEQSG (109 aa)) are disordered. Positions 333–409 (TAAATAPAAE…QPPAEPVVHV (77 aa)) are enriched in low complexity.

This sequence belongs to the protein kinase superfamily. CAMK Ser/Thr protein kinase family. Interacts with calmodulin, in the presence of calcium. Ca(2+) is required as a cofactor.

It is found in the cytoplasmic vesicle membrane. In terms of biological role, does not appear to have detectable kinase activity. The chain is CaM kinase-like vesicle-associated protein (camkv) from Danio rerio (Zebrafish).